Here is a 480-residue protein sequence, read N- to C-terminus: 6-phosphogluconate dehydrogenase, decarboxylating (480 aa).

NADP(+) is bound by residues 11 to 16, 34 to 36, 76 to 78, and N104; these read GLAVMG, NRS, and IKA. Substrate is bound by residues N104 and 130–132; that span reads SGG. Residue K184 is the Proton acceptor of the active site. A substrate-binding site is contributed by 187-188; sequence HN. E191 serves as the catalytic Proton donor. Residues Y192, K261, R288, R448, and H454 each contribute to the substrate site.

It belongs to the 6-phosphogluconate dehydrogenase family. In terms of assembly, homodimer.

The catalysed reaction is 6-phospho-D-gluconate + NADP(+) = D-ribulose 5-phosphate + CO2 + NADPH. It functions in the pathway carbohydrate degradation; pentose phosphate pathway; D-ribulose 5-phosphate from D-glucose 6-phosphate (oxidative stage): step 3/3. Its function is as follows. Catalyzes the oxidative decarboxylation of 6-phosphogluconate to ribulose 5-phosphate and CO(2), with concomitant reduction of NADP to NADPH. The polypeptide is 6-phosphogluconate dehydrogenase, decarboxylating (gnd) (Chlamydia trachomatis serovar D (strain ATCC VR-885 / DSM 19411 / UW-3/Cx)).